The primary structure comprises 415 residues: Diaminopimelate decarboxylase (415 aa).

Position 60 is an N6-(pyridoxal phosphate)lysine (Lys-60). Pyridoxal 5'-phosphate-binding positions include Gly-239 and 274–277 (EPGR). The substrate site is built by Arg-277, Arg-313, and Tyr-317. Catalysis depends on Cys-344, which acts as the Proton donor. Residues Glu-345 and Tyr-372 each coordinate substrate. Tyr-372 contributes to the pyridoxal 5'-phosphate binding site.

This sequence belongs to the Orn/Lys/Arg decarboxylase class-II family. LysA subfamily. As to quaternary structure, homodimer. Requires pyridoxal 5'-phosphate as cofactor.

The enzyme catalyses meso-2,6-diaminopimelate + H(+) = L-lysine + CO2. It functions in the pathway amino-acid biosynthesis; L-lysine biosynthesis via DAP pathway; L-lysine from DL-2,6-diaminopimelate: step 1/1. Specifically catalyzes the decarboxylation of meso-diaminopimelate (meso-DAP) to L-lysine. This chain is Diaminopimelate decarboxylase, found in Haemophilus influenzae (strain ATCC 51907 / DSM 11121 / KW20 / Rd).